The sequence spans 535 residues: Nuclear/nucleolar GTPase 2 (535 aa).

A disordered region spans residues 1–42 (MAKKKERAVNVSGKPRHSLDVNRANDKKGAGGGAGGGGGGRS). Residues 17 to 29 (HSLDVNRANDKKG) are compositionally biased toward basic and acidic residues. Gly residues predominate over residues 30–41 (AGGGAGGGGGGR). One can recognise a CP-type G domain in the interval 213–374 (WGELYKVIDS…LIDCPGVVYQ (162 aa)). The G4 stretch occupies residues 261 to 264 (NKCD). The G5 stretch occupies residues 290–292 (SIN). Residues 323-330 (GYPNVGKS) are G1. Residues 349–353 (GETKV) are G2. The tract at residues 367-370 (DCPG) is G3. The tract at residues 464 to 495 (FFVPPPQQGEDSPSETAEPVDKSDEEGVSSDR) is disordered.

This sequence belongs to the TRAFAC class YlqF/YawG GTPase family. RsgA subfamily.

The protein localises to the nucleus. It localises to the nucleolus. Functionally, GTPase involved in pre-60S ribosomal subunit maturation. The protein is Nuclear/nucleolar GTPase 2 of Oryza sativa subsp. indica (Rice).